We begin with the raw amino-acid sequence, 247 residues long: Ribosomal RNA large subunit methyltransferase E (247 aa).

Residues 1 to 21 (MKVNPKNSPKDNLKDSPKVSA) are disordered. Residues 8–17 (SPKDNLKDSP) are compositionally biased toward basic and acidic residues. S-adenosyl-L-methionine contacts are provided by glycine 80, tryptophan 82, aspartate 108, aspartate 124, and aspartate 153. Catalysis depends on lysine 193, which acts as the Proton acceptor.

The protein belongs to the class I-like SAM-binding methyltransferase superfamily. RNA methyltransferase RlmE family.

It localises to the cytoplasm. It catalyses the reaction uridine(2552) in 23S rRNA + S-adenosyl-L-methionine = 2'-O-methyluridine(2552) in 23S rRNA + S-adenosyl-L-homocysteine + H(+). Its function is as follows. Specifically methylates the uridine in position 2552 of 23S rRNA at the 2'-O position of the ribose in the fully assembled 50S ribosomal subunit. The sequence is that of Ribosomal RNA large subunit methyltransferase E from Polaromonas sp. (strain JS666 / ATCC BAA-500).